The primary structure comprises 581 residues: ATP-dependent lipid A-core flippase (581 aa).

A run of 5 helical transmembrane segments spans residues 15-35 (LWPI…ALII), 62-82 (ISIW…SSGF), 152-172 (IIGL…VLII), 252-272 (IIIQ…SSLP), and 274-294 (IIDE…IALM). The region spanning 27-309 (IISIVALIIN…LTNVNANFQK (283 aa)) is the ABC transmembrane type-1 domain. An ABC transporter domain is found at 341–577 (IKFKNITFTY…KGVYAQIYRL (237 aa)). 375–382 (GSSGAGKS) lines the ATP pocket.

The protein belongs to the ABC transporter superfamily. Lipid exporter (TC 3.A.1.106) family. In terms of assembly, homodimer.

Its subcellular location is the cell membrane. It carries out the reaction ATP + H2O + lipid A-core oligosaccharideSide 1 = ADP + phosphate + lipid A-core oligosaccharideSide 2.. Its function is as follows. Involved in lipopolysaccharide (LPS) biosynthesis. Translocates lipid A-core from the inner to the outer leaflet of the inner membrane. Transmembrane domains (TMD) form a pore in the inner membrane and the ATP-binding domain (NBD) is responsible for energy generation. This is ATP-dependent lipid A-core flippase from Wigglesworthia glossinidia brevipalpis.